Consider the following 632-residue polypeptide: 1-deoxy-D-xylulose-5-phosphate synthase (632 aa).

Residues His-79 and 120 to 122 (GHA) each bind thiamine diphosphate. Asp-151 is a binding site for Mg(2+). Thiamine diphosphate-binding positions include 152–153 (GS), Asn-180, Phe-292, and Glu-376. Position 180 (Asn-180) interacts with Mg(2+).

The protein belongs to the transketolase family. DXPS subfamily. As to quaternary structure, homodimer. It depends on Mg(2+) as a cofactor. Thiamine diphosphate is required as a cofactor.

It carries out the reaction D-glyceraldehyde 3-phosphate + pyruvate + H(+) = 1-deoxy-D-xylulose 5-phosphate + CO2. It participates in metabolic intermediate biosynthesis; 1-deoxy-D-xylulose 5-phosphate biosynthesis; 1-deoxy-D-xylulose 5-phosphate from D-glyceraldehyde 3-phosphate and pyruvate: step 1/1. Its function is as follows. Catalyzes the acyloin condensation reaction between C atoms 2 and 3 of pyruvate and glyceraldehyde 3-phosphate to yield 1-deoxy-D-xylulose-5-phosphate (DXP). This is 1-deoxy-D-xylulose-5-phosphate synthase from Azobacteroides pseudotrichonymphae genomovar. CFP2.